A 481-amino-acid chain; its full sequence is 3-ketoacyl-CoA synthase 8 (481 aa).

2 consecutive transmembrane segments (helical) span residues 4–24 (LKMVFFKILFISLMAGLAMKG) and 44–64 (LQTISLLLFLVVFVWILYMLT). An FAE domain is found at 61 to 358 (YMLTRPKPVY…FFITFVKKKY (298 aa)). Catalysis depends on residues Cys213, His292, His376, His380, His409, and Asn413.

It belongs to the thiolase-like superfamily. Chalcone/stilbene synthases family. In terms of tissue distribution, expressed in leaves and seedlings.

Its subcellular location is the endoplasmic reticulum membrane. It carries out the reaction a very-long-chain acyl-CoA + malonyl-CoA + H(+) = a very-long-chain 3-oxoacyl-CoA + CO2 + CoA. The protein operates within lipid metabolism; fatty acid biosynthesis. This is 3-ketoacyl-CoA synthase 8 from Arabidopsis thaliana (Mouse-ear cress).